The sequence spans 264 residues: Ribosomal protein L11 methyltransferase (264 aa).

S-adenosyl-L-methionine contacts are provided by Thr116, Gly137, Asp159, and Asn200.

It belongs to the methyltransferase superfamily. PrmA family.

The protein resides in the cytoplasm. It carries out the reaction L-lysyl-[protein] + 3 S-adenosyl-L-methionine = N(6),N(6),N(6)-trimethyl-L-lysyl-[protein] + 3 S-adenosyl-L-homocysteine + 3 H(+). In terms of biological role, methylates ribosomal protein L11. The polypeptide is Ribosomal protein L11 methyltransferase (Thermotoga petrophila (strain ATCC BAA-488 / DSM 13995 / JCM 10881 / RKU-1)).